A 418-amino-acid chain; its full sequence is Histidine--tRNA ligase (418 aa).

Belongs to the class-II aminoacyl-tRNA synthetase family. Homodimer.

It localises to the cytoplasm. It catalyses the reaction tRNA(His) + L-histidine + ATP = L-histidyl-tRNA(His) + AMP + diphosphate + H(+). This is Histidine--tRNA ligase from Thermosipho africanus (strain TCF52B).